Here is a 95-residue protein sequence, read N- to C-terminus: Protein RnfH (95 aa).

This sequence belongs to the UPF0125 (RnfH) family.

The sequence is that of Protein RnfH from Erwinia tasmaniensis (strain DSM 17950 / CFBP 7177 / CIP 109463 / NCPPB 4357 / Et1/99).